Consider the following 387-residue polypeptide: MRILKSHPLLKIVNSYIIDSPQPANLSYLWNFGSLLALCLGIQIVTGVTLAMHYTPSVSEAFNSVEHIMRDVNNGWLVRYLHSNTASAFFFLVYLHIGRGLYYGSYKTPRTLTWAIGTVILIVMMATAFLGYVLPYGQMSLWGATVITNLMSAIPWIGQDIVEFIWGGFSVNNATLNRFFALHFLLPFVLAALALMHLIAMHDTVGSGNPLGISANYDRLPFAPYFIFKDLITIFIFFIVLSIFVFFMPNALGDSENYVMANPMQTPPAIVPEWYLLPFYAILRSIPNKLLGVIAMFAAILALMVMPITDLSKLRGVQFRPLSKVVFYIFVANFLILMQIGAKHVETPFIEFGQISTIIYFAYFFVIVPVVSLIENTLVELGTKKNF.

Transmembrane regions (helical) follow at residues 32–52 (FGSL…TLAM), 76–98 (WLVR…LHIG), 113–133 (TWAI…LGYV), and 179–199 (FFAL…MHLI). Heme b-binding residues include His-82 and His-96. His-183 and His-197 together coordinate heme b. Residue His-202 participates in a ubiquinone binding. Transmembrane regions (helical) follow at residues 226–246 (FIFK…IFVF), 290–310 (LLGV…PITD), 322–342 (LSKV…QIGA), and 349–369 (FIEF…VIVP).

This sequence belongs to the cytochrome b family. In terms of assembly, fungal cytochrome b-c1 complex contains 10 subunits; 3 respiratory subunits, 2 core proteins and 5 low-molecular weight proteins. Cytochrome b-c1 complex is a homodimer. The cofactor is heme b.

Its subcellular location is the mitochondrion inner membrane. Its function is as follows. Component of the ubiquinol-cytochrome c reductase complex (complex III or cytochrome b-c1 complex) that is part of the mitochondrial respiratory chain. The b-c1 complex mediates electron transfer from ubiquinol to cytochrome c. Contributes to the generation of a proton gradient across the mitochondrial membrane that is then used for ATP synthesis. The polypeptide is Cytochrome b (cob) (Emericella nidulans (Aspergillus nidulans)).